A 926-amino-acid polypeptide reads, in one-letter code: Bifunctional uridylyltransferase/uridylyl-removing enzyme (926 aa).

The uridylyltransferase stretch occupies residues 1-379; it reads MPVSFLSLAS…PKSRRSGASK (379 aa). Residues 380–736 are uridylyl-removing; that stretch reads QIDGFPVIQG…GHEMPAYDAT (357 aa). The 123-residue stretch at 496–618 folds into the HD domain; the sequence is VDEHAIRALD…VKSPERLRLL (123 aa). 2 ACT domains span residues 737–814 and 849–926; these read MISL…IRSS and VIEV…ISEK.

The protein belongs to the GlnD family. Requires Mg(2+) as cofactor.

It carries out the reaction [protein-PII]-L-tyrosine + UTP = [protein-PII]-uridylyl-L-tyrosine + diphosphate. The catalysed reaction is [protein-PII]-uridylyl-L-tyrosine + H2O = [protein-PII]-L-tyrosine + UMP + H(+). With respect to regulation, uridylyltransferase (UTase) activity is inhibited by glutamine, while glutamine activates uridylyl-removing (UR) activity. Functionally, modifies, by uridylylation and deuridylylation, the PII regulatory proteins (GlnB and homologs), in response to the nitrogen status of the cell that GlnD senses through the glutamine level. Under low glutamine levels, catalyzes the conversion of the PII proteins and UTP to PII-UMP and PPi, while under higher glutamine levels, GlnD hydrolyzes PII-UMP to PII and UMP (deuridylylation). Thus, controls uridylylation state and activity of the PII proteins, and plays an important role in the regulation of nitrogen assimilation and metabolism. The protein is Bifunctional uridylyltransferase/uridylyl-removing enzyme of Zymomonas mobilis subsp. mobilis (strain ATCC 31821 / ZM4 / CP4).